The chain runs to 879 residues: Leucine--tRNA ligase (879 aa).

Residues 45–55 carry the 'HIGH' region motif; it reads PYPSGALHMGH. The short motif at 637-641 is the 'KMSKS' region element; it reads KMSKS. K640 provides a ligand contact to ATP.

It belongs to the class-I aminoacyl-tRNA synthetase family.

It is found in the cytoplasm. The catalysed reaction is tRNA(Leu) + L-leucine + ATP = L-leucyl-tRNA(Leu) + AMP + diphosphate. In Xylella fastidiosa (strain 9a5c), this protein is Leucine--tRNA ligase.